The sequence spans 257 residues: Protein YIPF5 (257 aa).

Residues 1–124 (MSGFDNLNSG…RASDGSIMNE (124 aa)) are Cytoplasmic-facing. Positions 75-106 (PPTPQTFYGDSFEEEPPLLEELGINFDHIWQK) are interaction with Sec23. A helical transmembrane segment spans residues 125 to 145 (TDLAGPVVFCLAFGATLLLAG). Position 146 (K146) is a topological domain, lumenal. Residues 147–167 (IQFGYVYGISAIGCLGMFCLL) traverse the membrane as a helical segment. Topologically, residues 168-173 (NLMSMT) are cytoplasmic. Residues 174 to 194 (GVSFGCVASVLGYCLLPMILL) form a helical membrane-spanning segment. Residues 195-196 (SS) are Lumenal-facing. Residues 197–217 (FAVVFSLQGMVGILLTATIIG) traverse the membrane as a helical segment. The Cytoplasmic portion of the chain corresponds to 218-236 (WCSFSASKIFISALAMDGQ). The helical transmembrane segment at 237-257 (QLLVAYPCALLYGVFALISVF) threads the bilayer.

This sequence belongs to the YIP1 family. Interacts with the COPII coat components Sec23 (SEC23A and/or SEC23B) and Sec24 (SEC24A and/or SEC24B). Interacts with YIF1A. May interact with RAB1A. Interacts with YIPF3 and YIPF4.

It is found in the endoplasmic reticulum membrane. Its subcellular location is the golgi apparatus. It localises to the cis-Golgi network membrane. The protein resides in the cytoplasmic vesicle. The protein localises to the COPII-coated vesicle. Its function is as follows. Plays a role in transport between endoplasmic reticulum and Golgi. In pancreatic beta cells, required to transport proinsulin from endoplasmic reticulum into the Golgi. In Rattus norvegicus (Rat), this protein is Protein YIPF5.